A 262-amino-acid polypeptide reads, in one-letter code: Fibroin light chain (262 aa).

A signal peptide spans 1–16; sequence MKPIFLVLLVATSAYA. Residue Ser-19 is modified to N-acetylserine; in short form. Cys-101 and Cys-160 are joined by a disulfide.

In terms of assembly, silk fibroin elementary unit consists in a disulfide-linked heavy and light chain and a p25 glycoprotein in molar ratios of 6:6:1. This results in a complex of approximately 2.3 MDa. In terms of processing, the interchain disulfide bridge is essential for the intracellular transport and secretion of fibroin. Post-translationally, partially N-terminally processed to yield a short form which lacks the first two residues of the long form. As to expression, produced exclusively in the posterior (PSG) section of silk glands, which are essentially modified salivary glands.

It is found in the secreted. Its function is as follows. It is likely that the major role of L-chain is to prevent the retention of H-chain in ER by forming the disulfide linkage. The sequence is that of Fibroin light chain (FIBL) from Bombyx mori (Silk moth).